A 289-amino-acid polypeptide reads, in one-letter code: Toxin tox21A (289 aa).

Positions 1–14 (MNLYFLFFISTILA) are cleaved as a signal peptide. Residues 15–27 (AKPFNSFNKTSLI) constitute a propeptide that is removed on maturation. The disordered stretch occupies residues 270-289 (DKDITVHENAGDPKSDSRRC).

Contains several disulfide bonds. In terms of tissue distribution, posterior glands which appear to be connected with the stylet through a series of ducts.

The protein localises to the secreted. In terms of biological role, has contracting-paralyzing activity in insect larvae. This Pyemotes tritici (Straw itch mite) protein is Toxin tox21A.